Here is a 359-residue protein sequence, read N- to C-terminus: GTP 3',8-cyclase 1 (359 aa).

The Radical SAM core domain maps to 21–241 (RCRRMMGDLR…SLEKRYGRIE (221 aa)). R30 contributes to the GTP binding site. C37 and C41 together coordinate [4Fe-4S] cluster. S-adenosyl-L-methionine is bound at residue Y43. Residue C44 participates in [4Fe-4S] cluster binding. Residue R80 participates in GTP binding. G84 is an S-adenosyl-L-methionine binding site. T115 contributes to the GTP binding site. S139 is an S-adenosyl-L-methionine binding site. K176 is a binding site for GTP. M210 contributes to the S-adenosyl-L-methionine binding site. [4Fe-4S] cluster-binding residues include C273 and C276. GTP is bound at residue 278–280 (RSR). Position 290 (C290) interacts with [4Fe-4S] cluster.

Belongs to the radical SAM superfamily. MoaA family. As to quaternary structure, monomer and homodimer. The cofactor is [4Fe-4S] cluster.

It catalyses the reaction GTP + AH2 + S-adenosyl-L-methionine = (8S)-3',8-cyclo-7,8-dihydroguanosine 5'-triphosphate + 5'-deoxyadenosine + L-methionine + A + H(+). Its pathway is cofactor biosynthesis; molybdopterin biosynthesis. Functionally, catalyzes the cyclization of GTP to (8S)-3',8-cyclo-7,8-dihydroguanosine 5'-triphosphate. The protein is GTP 3',8-cyclase 1 of Mycobacterium tuberculosis (strain CDC 1551 / Oshkosh).